The chain runs to 78 residues: Acyl carrier protein (78 aa).

One can recognise a Carrier domain in the interval 1 to 76 (MALFEDIQAV…DVVKYIEDNK (76 aa)). Serine 36 carries the post-translational modification O-(pantetheine 4'-phosphoryl)serine.

It belongs to the acyl carrier protein (ACP) family. In terms of processing, 4'-phosphopantetheine is transferred from CoA to a specific serine of apo-ACP by AcpS. This modification is essential for activity because fatty acids are bound in thioester linkage to the sulfhydryl of the prosthetic group.

It is found in the cytoplasm. The protein operates within lipid metabolism; fatty acid biosynthesis. Carrier of the growing fatty acid chain in fatty acid biosynthesis. The sequence is that of Acyl carrier protein from Helicobacter pylori (strain G27).